A 375-amino-acid polypeptide reads, in one-letter code: uncharacterized protein (375 aa).

Residue Lys99 forms an Isoglutamyl lysine isopeptide (Lys-Gln) (interchain with Q-Cter in protein Pup) linkage.

The protein belongs to the IMPDH/GMPR family.

This is an uncharacterized protein from Mycolicibacterium smegmatis (strain ATCC 700084 / mc(2)155) (Mycobacterium smegmatis).